A 391-amino-acid chain; its full sequence is Argininosuccinate synthase (391 aa).

6 to 14 (AYSGGLDTT) contacts ATP. Residue Tyr84 coordinates L-citrulline. Residue Gly114 coordinates ATP. Residues Thr116, Asn120, and Asp121 each contribute to the L-aspartate site. Residue Asn120 participates in L-citrulline binding. Residues Arg124, Ser171, Ser180, Glu253, and Tyr265 each coordinate L-citrulline.

This sequence belongs to the argininosuccinate synthase family. Type 1 subfamily. As to quaternary structure, homotetramer.

It localises to the cytoplasm. It carries out the reaction L-citrulline + L-aspartate + ATP = 2-(N(omega)-L-arginino)succinate + AMP + diphosphate + H(+). The protein operates within amino-acid biosynthesis; L-arginine biosynthesis; L-arginine from L-ornithine and carbamoyl phosphate: step 2/3. This chain is Argininosuccinate synthase, found in Metallosphaera sedula (strain ATCC 51363 / DSM 5348 / JCM 9185 / NBRC 15509 / TH2).